Here is a 221-residue protein sequence, read N- to C-terminus: Histidine biosynthesis bifunctional protein HisIE (221 aa).

Positions 1–129 (MAYSKNFSIE…AKKTSPFSNI (129 aa)) are phosphoribosyl-AMP cyclohydrolase. The segment at 130–221 (CSELFDTLHE…VLESRRGKNN (92 aa)) is phosphoribosyl-ATP pyrophosphohydrolase.

It in the N-terminal section; belongs to the PRA-CH family. The protein in the C-terminal section; belongs to the PRA-PH family.

The protein resides in the cytoplasm. It carries out the reaction 1-(5-phospho-beta-D-ribosyl)-ATP + H2O = 1-(5-phospho-beta-D-ribosyl)-5'-AMP + diphosphate + H(+). It catalyses the reaction 1-(5-phospho-beta-D-ribosyl)-5'-AMP + H2O = 1-(5-phospho-beta-D-ribosyl)-5-[(5-phospho-beta-D-ribosylamino)methylideneamino]imidazole-4-carboxamide. The protein operates within amino-acid biosynthesis; L-histidine biosynthesis; L-histidine from 5-phospho-alpha-D-ribose 1-diphosphate: step 2/9. It participates in amino-acid biosynthesis; L-histidine biosynthesis; L-histidine from 5-phospho-alpha-D-ribose 1-diphosphate: step 3/9. This Prochlorococcus marinus subsp. pastoris (strain CCMP1986 / NIES-2087 / MED4) protein is Histidine biosynthesis bifunctional protein HisIE.